The chain runs to 257 residues: Zinc import ATP-binding protein ZnuC (257 aa).

The region spanning 5 to 220 (VELQSVTVTF…PSYVALFGQQ (216 aa)) is the ABC transporter domain. Residue 37-44 (GPNGAGKS) coordinates ATP. A disordered region spans residues 234–257 (HEHDLAGSPVGPCQHNKQHGHDNA).

The protein belongs to the ABC transporter superfamily. Zinc importer (TC 3.A.1.15.5) family. As to quaternary structure, the complex is composed of two ATP-binding proteins (ZnuC), two transmembrane proteins (ZnuB) and a solute-binding protein (ZnuA).

It localises to the cell inner membrane. The catalysed reaction is Zn(2+)(out) + ATP(in) + H2O(in) = Zn(2+)(in) + ADP(in) + phosphate(in) + H(+)(in). Its function is as follows. Part of the ABC transporter complex ZnuABC involved in zinc import. Responsible for energy coupling to the transport system. The chain is Zinc import ATP-binding protein ZnuC from Photobacterium profundum (strain SS9).